Consider the following 48-residue polypeptide: ATP synthase protein 8 (48 aa).

Residues 12 to 32 (LLTFGMLAISMLLYLVSTIIL) form a helical membrane-spanning segment.

This sequence belongs to the ATPase protein 8 family. As to quaternary structure, F-type ATPases have 2 components, CF(1) - the catalytic core - and CF(0) - the membrane proton channel.

It is found in the mitochondrion membrane. Its function is as follows. Mitochondrial membrane ATP synthase (F(1)F(0) ATP synthase or Complex V) produces ATP from ADP in the presence of a proton gradient across the membrane which is generated by electron transport complexes of the respiratory chain. F-type ATPases consist of two structural domains, F(1) - containing the extramembraneous catalytic core and F(0) - containing the membrane proton channel, linked together by a central stalk and a peripheral stalk. During catalysis, ATP synthesis in the catalytic domain of F(1) is coupled via a rotary mechanism of the central stalk subunits to proton translocation. Part of the complex F(0) domain. Minor subunit located with subunit a in the membrane. This is ATP synthase protein 8 (ATP8) from Debaryomyces hansenii (strain ATCC 36239 / CBS 767 / BCRC 21394 / JCM 1990 / NBRC 0083 / IGC 2968) (Yeast).